The following is a 367-amino-acid chain: Acryloyl-CoA reductase electron transfer subunit beta (367 aa).

An FAD-binding site is contributed by 305–333; sequence VYVALGISGAIQHKAGMQDSELIIAVNKD.

As to quaternary structure, heterohexadecamer; tetramer of tetramers. Each tetramer is composed of 2 alpha (AcrC), a beta (AcrA) and a gamma (AcrB) subunit.

Its subcellular location is the cytoplasm. Its function is as follows. Part of the ETF-acryloyl-CoA reductase complex involved in the pathway of L-alanine fermentation. The electron transfer flavoprotein (ETF) serves as a specific electron acceptor for acryloyl-CoA reductase. This is Acryloyl-CoA reductase electron transfer subunit beta (acrA) from Anaerotignum propionicum (Clostridium propionicum).